Reading from the N-terminus, the 501-residue chain is Armadillo repeat-containing protein 6 (501 aa).

Serine 64 is modified (phosphoserine). ARM repeat units lie at residues 220–264 (GVLP…HAHN), 274–318 (KGLK…DLGG), 319–369 (LSIL…RAGG), and 370–412 (TESI…VEGG). Position 263 is a pros-methylhistidine (histidine 263).

This sequence belongs to the ARMC6 family. Methylated at His-263 by METTL9.

In Homo sapiens (Human), this protein is Armadillo repeat-containing protein 6 (ARMC6).